The following is a 163-amino-acid chain: Crossover junction endodeoxyribonuclease RuvC (163 aa).

Catalysis depends on residues D4, E65, and D138. D4, E65, and D138 together coordinate Mg(2+).

Belongs to the RuvC family. As to quaternary structure, homodimer which binds Holliday junction (HJ) DNA. The HJ becomes 2-fold symmetrical on binding to RuvC with unstacked arms; it has a different conformation from HJ DNA in complex with RuvA. In the full resolvosome a probable DNA-RuvA(4)-RuvB(12)-RuvC(2) complex forms which resolves the HJ. Mg(2+) is required as a cofactor.

It is found in the cytoplasm. It carries out the reaction Endonucleolytic cleavage at a junction such as a reciprocal single-stranded crossover between two homologous DNA duplexes (Holliday junction).. In terms of biological role, the RuvA-RuvB-RuvC complex processes Holliday junction (HJ) DNA during genetic recombination and DNA repair. Endonuclease that resolves HJ intermediates. Cleaves cruciform DNA by making single-stranded nicks across the HJ at symmetrical positions within the homologous arms, yielding a 5'-phosphate and a 3'-hydroxyl group; requires a central core of homology in the junction. The consensus cleavage sequence is 5'-(A/T)TT(C/G)-3'. Cleavage occurs on the 3'-side of the TT dinucleotide at the point of strand exchange. HJ branch migration catalyzed by RuvA-RuvB allows RuvC to scan DNA until it finds its consensus sequence, where it cleaves and resolves the cruciform DNA. This Corynebacterium jeikeium (strain K411) protein is Crossover junction endodeoxyribonuclease RuvC.